A 1055-amino-acid polypeptide reads, in one-letter code: MALRRLGAALLLLPLLAAVEETLMDSTTATAELGWMVHPPSGWEEVSGYDENMNTIRTYQVCNVFESSQNNWLRTKFIRRRGAHRIHVEMKFSVRDCSSIPSVPGSCKETFNLYYYEADFDSATKTFPNWMENPWVKVDTIAADESFSQVDLGGRVMKINTEVRSFGPVSRSGFYLAFQDYGGCMSLIAVRVFYRKCPRIIQNGAIFQETLSGAESTSLVAARGSCIANAEEVDVPIKLYCNGDGEWLVPIGRCMCKAGFEAVENGTVCRGCPSGTFKANQGDEACTHCPINSRTTSEGATNCVCRNGYYRADLDPLDMPCTTIPSAPQAVISSVNETSLMLEWTPPRDSGGREDLVYNIICKSCGSGRGACTRCGDNVQYAPRQLGLTEPRIYISDLLAHTQYTFEIQAVNGVTDQSPFSPQFASVNITTNQAAPSAVSIMHQVSRTVDSITLSWSQPDQPNGVILDYELQYYEKELSEYNATAIKSPTNTVTVQGLKAGAIYVFQVRARTVAGYGRYSGKMYFQTMTEAEYQTSIQEKLPLIIGSSAAGLVFLIAVVVIAIVCNRRGFERADSEYTDKLQHYTSGHMTPGMKIYIDPFTYEDPNEAVREFAKEIDISCVKIEQVIGAGEFGEVCSGHLKLPGKREIFVAIKTLKSGYTEKQRRDFLSEASIMGQFDHPNVIHLEGVVTKSTPVMIITEFMENGSLDSFLRQNDGQFTVIQLVGMLRGIAAGMKYLADMNYVHRDLAARNILVNSNLVCKVSDFGLSRFLEDDTSDPTYTSALGGKIPIRWTAPEAIQYRKFTSASDVWSYGIVMWEVMSYGERPYWDMTNQDVINAIEQDYRLPPPMDCPSALHQLMLDCWQKDRNHRPKFGQIVNTLDKMIRNPNSLKAMAPLSSGINLPLLDRTIPDYTSFNTVDEWLEAIKMGQYKESFANAGFTSFDVVSQMMMEDILRVGVTLAGHQKKILNSIQVMRAQMNQIQSVEGQPLARRPRATGRTKRCQPRDVTKKTCNSNDGKKKGMGKKKTDPGRGREIQGIFFKEDSHKESNDCSCGG.

The first 18 residues, 1 to 18 (MALRRLGAALLLLPLLAA), serve as a signal peptide directing secretion. Residues 19-543 (VEETLMDSTT…QTSIQEKLPL (525 aa)) are Extracellular-facing. The Eph LBD domain maps to 20 to 202 (EETLMDSTTA…FYRKCPRIIQ (183 aa)). 2 cysteine pairs are disulfide-bonded: cysteine 62-cysteine 184 and cysteine 97-cysteine 107. Asparagine 265, asparagine 336, asparagine 428, and asparagine 482 each carry an N-linked (GlcNAc...) asparagine glycan. Fibronectin type-III domains are found at residues 324–434 (IPSA…TNQA) and 435–530 (APSA…TMTE). Residues 544–564 (IIGSSAAGLVFLIAVVVIAIV) traverse the membrane as a helical segment. The Cytoplasmic portion of the chain corresponds to 565 to 1055 (CNRRGFERAD…KESNDCSCGG (491 aa)). The Protein kinase domain occupies 621-884 (VKIEQVIGAG…QIVNTLDKMI (264 aa)). ATP contacts are provided by residues 627 to 635 (IGAGEFGEV) and lysine 653. Aspartate 746 functions as the Proton acceptor in the catalytic mechanism. A Glycyl lysine isopeptide (Lys-Gly) (interchain with G-Cter in ubiquitin) cross-link involves residue lysine 891. An SAM domain is found at 913-977 (TSFNTVDEWL…LNSIQVMRAQ (65 aa)). Phosphoserine occurs at positions 983 and 984. The PDZ-binding (in isoform 2) motif lies at 984-986 (VEG). Residues 990–1055 (ARRPRATGRT…KESNDCSCGG (66 aa)) are disordered. Positions 991 to 1002 (RRPRATGRTKRC) are enriched in basic residues. Over residues 1025–1049 (KKTDPGRGREIQGIFFKEDSHKESN) the composition is skewed to basic and acidic residues.

Belongs to the protein kinase superfamily. Tyr protein kinase family. Ephrin receptor subfamily. As to quaternary structure, heterotetramer upon binding of the ligand. The heterotetramer is composed of an ephrin dimer and a receptor dimer. Interacts (via PDZ-binding motif) with GRIP1 and PICK1 (via PDZ domain). Interacts with ARHGEF15; mediates ARHGEF15 phosphorylation, ubiquitination and degradation by the proteasome. Interacts with AQP1; involved in endolymph production in the inner ear. Interacts with SPSB1 and SPSB4. The phosphorylated form interacts with RASA1 (via SH2 domain 1). Interacts with EFNA5. Interacts with SH2D3C. Post-translationally, autophosphorylated; ligand binding stimulates autophosphorylation on tyrosine residues. In terms of processing, polyubiquitinated; ligand binding stimulates ubiquitination. Ubiquitinated by RNF186 at Lys-891, mainly through 'Lys-27'-linked polyubiquitin chains. Ubiquitinated by CRL2(KLHDC2) E3 ligase complex. Ligand binding induces cleavage by matrix metalloproteinases (MMPs) such as MMP7/MMP9, producing an EphB2/N-terminal fragment (NTF) and a C-terminal long fragment (EphB2-LF). EphB2-LF is further cleaved by MMPs, producing EphB2/CTF1 which is further cleaved by the PS1/gamma-secretase producing EphB2/CTF2. As to expression, brain, heart, lung, kidney, placenta, pancreas, liver and skeletal muscle. Preferentially expressed in fetal brain.

The protein resides in the cell membrane. It is found in the cell projection. Its subcellular location is the axon. The protein localises to the dendrite. The enzyme catalyses L-tyrosyl-[protein] + ATP = O-phospho-L-tyrosyl-[protein] + ADP + H(+). Its function is as follows. Receptor tyrosine kinase which binds promiscuously transmembrane ephrin-B family ligands residing on adjacent cells, leading to contact-dependent bidirectional signaling into neighboring cells. The signaling pathway downstream of the receptor is referred to as forward signaling while the signaling pathway downstream of the ephrin ligand is referred to as reverse signaling. Functions in axon guidance during development. Involved in the guidance of commissural axons, that form a major interhemispheric connection between the 2 temporal lobes of the cerebral cortex. Also involved in guidance of contralateral inner ear efferent growth cones at the midline and of retinal ganglion cell axons to the optic disk. In addition to axon guidance, also regulates dendritic spines development and maturation and stimulates the formation of excitatory synapses. Upon activation by EFNB1, abolishes the ARHGEF15-mediated negative regulation on excitatory synapse formation. Controls other aspects of development including angiogenesis, palate development and in inner ear development through regulation of endolymph production. Forward and reverse signaling through the EFNB2/EPHB2 complex regulate movement and adhesion of cells that tubularize the urethra and septate the cloaca. May function as a tumor suppressor. May be involved in the regulation of platelet activation and blood coagulation. The sequence is that of Ephrin type-B receptor 2 (EPHB2) from Homo sapiens (Human).